The following is a 151-amino-acid chain: Thymosin beta (151 aa).

4 tandem repeats follow at residues 24–29 (LKKVET), 62–67 (LHSTPV), 100–105 (LKKTET), and 134–139 (LHHVET). The tract at residues 24 to 139 (LKKVETTEKN…DKSALHHVET (116 aa)) is 4 X 6 AA repeat of L-[KH]-[KSH]-[VT]-[EP]-[TV].

This sequence belongs to the thymosin beta family. In terms of assembly, interacts (via repeats 1, 2 and 4) with G-actin in a 1:3 ratio. Interacts (via repeats 2 and 3) with F-actin. As to expression, at the comma stage, enriched in the developing nerve ring (at protein level). Ubiquitously expressed in larvae and adults with enrichment in the spermatheca, the intestinal tract and the posterior bulb of the pharynx (at protein level). Expressed in oocytes and in the gonad (at protein level).

Its subcellular location is the cytoplasm. The protein localises to the cell cortex. It localises to the cell junction. The protein resides in the cytoskeleton. Functionally, plays an important role in the organization of the cytoskeleton by regulating actin polymerization in two ways. Firstly, by binding to and sequestering actin monomers (G actin) inhibits actin polymerization. Secondly, by binding directly filamentous actin (F actin) promotes actin polymerization. Regulates the formation of cortical actin in oocytes conferring them enough rigidity to sustain the contractions during ovulation. The sequence is that of Thymosin beta from Caenorhabditis elegans.